The following is a 429-amino-acid chain: 3-phosphoshikimate 1-carboxyvinyltransferase (429 aa).

Residues Lys22, Ser23, and Arg27 each contribute to the 3-phosphoshikimate site. Lys22 contributes to the phosphoenolpyruvate binding site. The phosphoenolpyruvate site is built by Gly94 and Arg122. Residues Ser167, Gln169, Asp315, and Lys342 each coordinate 3-phosphoshikimate. Gln169 provides a ligand contact to phosphoenolpyruvate. Residue Asp315 is the Proton acceptor of the active site. Phosphoenolpyruvate contacts are provided by Arg346 and Arg388.

The protein belongs to the EPSP synthase family. In terms of assembly, monomer.

It localises to the cytoplasm. It catalyses the reaction 3-phosphoshikimate + phosphoenolpyruvate = 5-O-(1-carboxyvinyl)-3-phosphoshikimate + phosphate. Its pathway is metabolic intermediate biosynthesis; chorismate biosynthesis; chorismate from D-erythrose 4-phosphate and phosphoenolpyruvate: step 6/7. In terms of biological role, catalyzes the transfer of the enolpyruvyl moiety of phosphoenolpyruvate (PEP) to the 5-hydroxyl of shikimate-3-phosphate (S3P) to produce enolpyruvyl shikimate-3-phosphate and inorganic phosphate. The polypeptide is 3-phosphoshikimate 1-carboxyvinyltransferase (Citrifermentans bemidjiense (strain ATCC BAA-1014 / DSM 16622 / JCM 12645 / Bem) (Geobacter bemidjiensis)).